We begin with the raw amino-acid sequence, 270 residues long: MSRIEGVLKALKEQGRKALIPYITAGDPHPEETVSLMHTLVSAGADIIELGVPFSDPMADGPVIQLACERALKHGTSLRQVMAMVKEFRKTDPDTPVVLMGYLNPMEAMGYEAFADAAADAGVDGVLTVDLPPEEADQVAPLFADRHLDPVFLLAPTTTDERIKAISEHSSGYVYYVSIKGVTGSATIDVDEVAKKVAHVHELTALPVGVGFGIRDAETAAAVGRVSDGVIVGSVLVDTIARHQTDPDALRNALTDLLHPMREALDSLAH.

Active-site proton acceptor residues include Glu-49 and Asp-60.

Belongs to the TrpA family. As to quaternary structure, tetramer of two alpha and two beta chains.

The catalysed reaction is (1S,2R)-1-C-(indol-3-yl)glycerol 3-phosphate + L-serine = D-glyceraldehyde 3-phosphate + L-tryptophan + H2O. It functions in the pathway amino-acid biosynthesis; L-tryptophan biosynthesis; L-tryptophan from chorismate: step 5/5. Its function is as follows. The alpha subunit is responsible for the aldol cleavage of indoleglycerol phosphate to indole and glyceraldehyde 3-phosphate. The polypeptide is Tryptophan synthase alpha chain (Marinobacter nauticus (strain ATCC 700491 / DSM 11845 / VT8) (Marinobacter aquaeolei)).